The sequence spans 151 residues: Large-conductance mechanosensitive channel (151 aa).

Helical transmembrane passes span 14–34 (VVDMAVGIIVGGAFGTIVNTL), 38–58 (VLMPPLGLLIGGVDFTNLYLI), and 86–106 (GLFLNSVISFLIMAFAVFLLV).

Belongs to the MscL family. As to quaternary structure, homopentamer.

It localises to the cell inner membrane. Channel that opens in response to stretch forces in the membrane lipid bilayer. May participate in the regulation of osmotic pressure changes within the cell. In Pelodictyon phaeoclathratiforme (strain DSM 5477 / BU-1), this protein is Large-conductance mechanosensitive channel.